We begin with the raw amino-acid sequence, 153 residues long: UPF0743 protein YCR087C-A (153 aa).

2 C2HC LYAR-type zinc fingers span residues 1-26 (MVTF…YRCP) and 27-52 (NAYY…TSCI). Residues cysteine 6, cysteine 9, histidine 21, cysteine 25, cysteine 32, cysteine 35, histidine 48, and cysteine 51 each contribute to the Zn(2+) site. Residues 63–96 (YKGNKKQKQKQQQKQQQKQHQHQPVATPAKKVEK) form a disordered region. Basic residues predominate over residues 65–83 (GNKKQKQKQQQKQQQKQHQ).

It belongs to the UPF0743 family.

It localises to the nucleus. The protein resides in the nucleolus. The sequence is that of UPF0743 protein YCR087C-A from Saccharomyces cerevisiae (strain ATCC 204508 / S288c) (Baker's yeast).